Here is a 562-residue protein sequence, read N- to C-terminus: Arginine--tRNA ligase (562 aa).

Residues A136 to N146 carry the 'HIGH' region motif.

The protein belongs to the class-I aminoacyl-tRNA synthetase family. In terms of assembly, monomer.

It localises to the cytoplasm. It catalyses the reaction tRNA(Arg) + L-arginine + ATP = L-arginyl-tRNA(Arg) + AMP + diphosphate. This is Arginine--tRNA ligase (argS) from Caldanaerobacter subterraneus subsp. tengcongensis (strain DSM 15242 / JCM 11007 / NBRC 100824 / MB4) (Thermoanaerobacter tengcongensis).